We begin with the raw amino-acid sequence, 390 residues long: 8-amino-7-oxononanoate synthase (390 aa).

Residue arginine 19 coordinates substrate. 106–107 is a binding site for pyridoxal 5'-phosphate; sequence GY. Histidine 131 contributes to the substrate binding site. Residues serine 176, histidine 204, and threonine 233 each contribute to the pyridoxal 5'-phosphate site. Residue lysine 236 is modified to N6-(pyridoxal phosphate)lysine. Threonine 350 is a binding site for substrate.

The protein belongs to the class-II pyridoxal-phosphate-dependent aminotransferase family. BioF subfamily. Homodimer. Requires pyridoxal 5'-phosphate as cofactor.

The enzyme catalyses 6-carboxyhexanoyl-[ACP] + L-alanine + H(+) = (8S)-8-amino-7-oxononanoate + holo-[ACP] + CO2. It participates in cofactor biosynthesis; biotin biosynthesis. Catalyzes the decarboxylative condensation of pimeloyl-[acyl-carrier protein] and L-alanine to produce 8-amino-7-oxononanoate (AON), [acyl-carrier protein], and carbon dioxide. The sequence is that of 8-amino-7-oxononanoate synthase from Pseudomonas putida (strain GB-1).